The primary structure comprises 358 residues: Small ribosomal subunit biogenesis GTPase RsgA 2 (358 aa).

In terms of domain architecture, CP-type G spans 106–261; that stretch reads AEQLIAANVD…LIDTPGMREI (156 aa). GTP contacts are provided by residues 151–154 and 203–211; these read SKAD and GSSGVGKST. Positions 284, 289, 291, and 297 each coordinate Zn(2+).

Belongs to the TRAFAC class YlqF/YawG GTPase family. RsgA subfamily. Monomer. Associates with 30S ribosomal subunit, binds 16S rRNA. Requires Zn(2+) as cofactor.

Its subcellular location is the cytoplasm. Its function is as follows. One of several proteins that assist in the late maturation steps of the functional core of the 30S ribosomal subunit. Helps release RbfA from mature subunits. May play a role in the assembly of ribosomal proteins into the subunit. Circularly permuted GTPase that catalyzes slow GTP hydrolysis, GTPase activity is stimulated by the 30S ribosomal subunit. The protein is Small ribosomal subunit biogenesis GTPase RsgA 2 of Vibrio parahaemolyticus serotype O3:K6 (strain RIMD 2210633).